A 122-amino-acid polypeptide reads, in one-letter code: Serum amyloid A-2 protein (122 aa).

Residues 1–19 form the signal peptide; the sequence is MKLLTSLVFCSLLLGVCHG. A compositionally biased stretch (basic and acidic residues) spans 89–108; that stretch reads RGHEDTMADQEANRHGRSGK. Residues 89–122 are disordered; it reads RGHEDTMADQEANRHGRSGKDPNYYRPPGLPAKY.

This sequence belongs to the SAA family. Apolipoprotein of the HDL complex. As to expression, expressed by the liver; secreted in plasma.

It is found in the secreted. Functionally, major acute phase reactant. This Mus musculus (Mouse) protein is Serum amyloid A-2 protein.